The following is a 204-amino-acid chain: High frequency lysogenization protein HflD homolog (204 aa).

The protein belongs to the HflD family.

The protein localises to the cytoplasm. It is found in the cell inner membrane. The sequence is that of High frequency lysogenization protein HflD homolog from Xanthomonas euvesicatoria pv. vesicatoria (strain 85-10) (Xanthomonas campestris pv. vesicatoria).